The chain runs to 424 residues: Histidine--tRNA ligase (424 aa).

It belongs to the class-II aminoacyl-tRNA synthetase family. As to quaternary structure, homodimer.

Its subcellular location is the cytoplasm. It carries out the reaction tRNA(His) + L-histidine + ATP = L-histidyl-tRNA(His) + AMP + diphosphate + H(+). The chain is Histidine--tRNA ligase from Marinomonas sp. (strain MWYL1).